The sequence spans 155 residues: Endoribonuclease YbeY (155 aa).

Zn(2+)-binding residues include H120, H124, and H130.

It belongs to the endoribonuclease YbeY family. Zn(2+) serves as cofactor.

It is found in the cytoplasm. Single strand-specific metallo-endoribonuclease involved in late-stage 70S ribosome quality control and in maturation of the 3' terminus of the 16S rRNA. The polypeptide is Endoribonuclease YbeY (Alkaliphilus metalliredigens (strain QYMF)).